Reading from the N-terminus, the 169-residue chain is Peptide deformylase (169 aa).

Cys-91 and His-133 together coordinate Fe cation. Glu-134 is a catalytic residue. Fe cation is bound at residue His-137.

Belongs to the polypeptide deformylase family. The cofactor is Fe(2+).

It catalyses the reaction N-terminal N-formyl-L-methionyl-[peptide] + H2O = N-terminal L-methionyl-[peptide] + formate. Functionally, removes the formyl group from the N-terminal Met of newly synthesized proteins. Requires at least a dipeptide for an efficient rate of reaction. N-terminal L-methionine is a prerequisite for activity but the enzyme has broad specificity at other positions. This chain is Peptide deformylase, found in Haemophilus influenzae (strain 86-028NP).